The chain runs to 257 residues: Pyridoxine 5'-phosphate synthase (257 aa).

Asparagine 16 contacts 3-amino-2-oxopropyl phosphate. 18–19 provides a ligand contact to 1-deoxy-D-xylulose 5-phosphate; that stretch reads DH. Arginine 27 serves as a coordination point for 3-amino-2-oxopropyl phosphate. Catalysis depends on histidine 52, which acts as the Proton acceptor. Arginine 54 and histidine 59 together coordinate 1-deoxy-D-xylulose 5-phosphate. The Proton acceptor role is filled by glutamate 79. A 1-deoxy-D-xylulose 5-phosphate-binding site is contributed by threonine 109. The Proton donor role is filled by histidine 200. Residues glycine 201 and 222 to 223 contribute to the 3-amino-2-oxopropyl phosphate site; that span reads GH.

Belongs to the PNP synthase family. As to quaternary structure, homooctamer; tetramer of dimers.

Its subcellular location is the cytoplasm. The catalysed reaction is 3-amino-2-oxopropyl phosphate + 1-deoxy-D-xylulose 5-phosphate = pyridoxine 5'-phosphate + phosphate + 2 H2O + H(+). It participates in cofactor biosynthesis; pyridoxine 5'-phosphate biosynthesis; pyridoxine 5'-phosphate from D-erythrose 4-phosphate: step 5/5. Its function is as follows. Catalyzes the complicated ring closure reaction between the two acyclic compounds 1-deoxy-D-xylulose-5-phosphate (DXP) and 3-amino-2-oxopropyl phosphate (1-amino-acetone-3-phosphate or AAP) to form pyridoxine 5'-phosphate (PNP) and inorganic phosphate. This Burkholderia pseudomallei (strain 1710b) protein is Pyridoxine 5'-phosphate synthase.